The following is a 472-amino-acid chain: Adenosylhomocysteinase (472 aa).

Substrate contacts are provided by Thr61, Asp136, and Glu196. 197-199 (TTT) lines the NAD(+) pocket. Positions 226 and 230 each coordinate substrate. NAD(+) is bound by residues Asn231, 260 to 265 (GYGDVG), Glu283, Asn318, 339 to 341 (IGH), and Asn384.

The protein belongs to the adenosylhomocysteinase family. Requires NAD(+) as cofactor.

The protein localises to the cytoplasm. It carries out the reaction S-adenosyl-L-homocysteine + H2O = L-homocysteine + adenosine. It participates in amino-acid biosynthesis; L-homocysteine biosynthesis; L-homocysteine from S-adenosyl-L-homocysteine: step 1/1. May play a key role in the regulation of the intracellular concentration of adenosylhomocysteine. In Cupriavidus necator (strain ATCC 17699 / DSM 428 / KCTC 22496 / NCIMB 10442 / H16 / Stanier 337) (Ralstonia eutropha), this protein is Adenosylhomocysteinase.